Reading from the N-terminus, the 288-residue chain is Co-chaperone protein DjlA (288 aa).

At 1-6 (MEFIGK) the chain is on the periplasmic side. A helical membrane pass occupies residues 7–30 (IIGVFLGWKVGGFFGAIAGLILGS). Topologically, residues 31 to 288 (IADKKLYELG…DLICKAKGWK (258 aa)) are cytoplasmic. Residues 222-288 (DAYKVLGVTE…DLICKAKGWK (67 aa)) form the J domain.

In terms of assembly, homodimer.

It localises to the cell inner membrane. Regulatory DnaK co-chaperone. Direct interaction between DnaK and DjlA is needed for the induction of the wcaABCDE operon, involved in the synthesis of a colanic acid polysaccharide capsule, possibly through activation of the RcsB/RcsC phosphotransfer signaling pathway. The colanic acid capsule may help the bacterium survive conditions outside the host. In Haemophilus influenzae (strain ATCC 51907 / DSM 11121 / KW20 / Rd), this protein is Co-chaperone protein DjlA.